The following is a 247-amino-acid chain: Uridylate kinase (247 aa).

An ATP-binding site is contributed by 19-22 (KISG). Gly61 lines the UMP pocket. ATP-binding residues include Gly62 and Arg66. UMP contacts are provided by residues Asp81 and 142-149 (TGNPFFTT). ATP contacts are provided by Thr169, Gln170, Tyr175, and Asp178.

The protein belongs to the UMP kinase family. In terms of assembly, homohexamer.

It localises to the cytoplasm. The catalysed reaction is UMP + ATP = UDP + ADP. The protein operates within pyrimidine metabolism; CTP biosynthesis via de novo pathway; UDP from UMP (UMPK route): step 1/1. With respect to regulation, inhibited by UTP. In terms of biological role, catalyzes the reversible phosphorylation of UMP to UDP. This chain is Uridylate kinase, found in Wolbachia pipientis wMel.